A 338-amino-acid chain; its full sequence is MAIELLYDADADLSLIQGRKVAIVGYGSQGHAHSQNLRDSGVEVVIGLREGSKSAEKAKEAGFEVKTTAEAAAWADVIMLLAPDTSQAEIFTNDIEPNLNAGDALLFGHGLNIHFDLIKPADDIIVGMVAPKGPGHLVRRQFVDGKGVPCLIAVDQDPTGTAQALTLSYAAAIGGARAGVIPTTFEAETVTDLFGEQAVLCGGTEELVKVGFEVLTEAGYEPEMAYFEVLHELKLIVDLMFEGGISNMNYSVSDTAEFGGYLSGPRVIDADTKSRMKDILTDIQDGTFTKRLIANVENGNTELEGLRASYNNHPIEETGAKLRDLMSWVKVDARAETA.

One can recognise a KARI N-terminal Rossmann domain in the interval 3 to 183 (IELLYDADAD…GGARAGVIPT (181 aa)). NADP(+)-binding positions include 26 to 29 (YGSQ), R49, S52, S54, and 84 to 87 (DTSQ). H109 is an active-site residue. An NADP(+)-binding site is contributed by G135. The KARI C-terminal knotted domain maps to 184 to 329 (TFEAETVTDL…AKLRDLMSWV (146 aa)). Residues D192, E196, E228, and E232 each coordinate Mg(2+). S253 contributes to the substrate binding site.

The protein belongs to the ketol-acid reductoisomerase family. Mg(2+) serves as cofactor.

It catalyses the reaction (2R)-2,3-dihydroxy-3-methylbutanoate + NADP(+) = (2S)-2-acetolactate + NADPH + H(+). It carries out the reaction (2R,3R)-2,3-dihydroxy-3-methylpentanoate + NADP(+) = (S)-2-ethyl-2-hydroxy-3-oxobutanoate + NADPH + H(+). Its pathway is amino-acid biosynthesis; L-isoleucine biosynthesis; L-isoleucine from 2-oxobutanoate: step 2/4. The protein operates within amino-acid biosynthesis; L-valine biosynthesis; L-valine from pyruvate: step 2/4. Its function is as follows. Involved in the biosynthesis of branched-chain amino acids (BCAA). Catalyzes an alkyl-migration followed by a ketol-acid reduction of (S)-2-acetolactate (S2AL) to yield (R)-2,3-dihydroxy-isovalerate. In the isomerase reaction, S2AL is rearranged via a Mg-dependent methyl migration to produce 3-hydroxy-3-methyl-2-ketobutyrate (HMKB). In the reductase reaction, this 2-ketoacid undergoes a metal-dependent reduction by NADPH to yield (R)-2,3-dihydroxy-isovalerate. This is Ketol-acid reductoisomerase (NADP(+)) from Corynebacterium glutamicum (strain ATCC 13032 / DSM 20300 / JCM 1318 / BCRC 11384 / CCUG 27702 / LMG 3730 / NBRC 12168 / NCIMB 10025 / NRRL B-2784 / 534).